The sequence spans 98 residues: MMKRLIPTFNRILVQGVIQPAKTESGILLPEKASKLNSGKVIAVGPGSRDKDGKLIPVSVKEGDTVLLPEYGGTQVKLGEKEYHLFRDEDVLGTLHED.

This sequence belongs to the GroES chaperonin family. In terms of assembly, forms stable complexes with CPN60 in the presence of ATP.

The protein resides in the cytoplasm. Its function is as follows. Seems to function only as a co-chaperone, along with cpn60, and in certain cases is essential for the discharge of biologically active proteins from cpn60. The chain is 10 kDa chaperonin from Brassica napus (Rape).